Consider the following 1043-residue polypeptide: Calcium-transporting ATPase 1, plasma membrane-type (1043 aa).

Over methionine 1–threonine 178 the chain is Cytoplasmic. The next 2 helical transmembrane spans lie at leucine 179–tryptophan 199 and glycine 202–alanine 222. The Cytoplasmic portion of the chain corresponds to serine 223–aspartate 258. The next 2 helical transmembrane spans lie at isoleucine 259–phenylalanine 279 and valine 356–methionine 376. Residues alanine 377–methionine 395 are Cytoplasmic-facing. A helical transmembrane segment spans residues valine 396–valine 416. Residue aspartate 460 is the 4-aspartylphosphate intermediate of the active site. Mg(2+) is bound by residues aspartate 761 and aspartate 765. The chain crosses the membrane as a helical span at residues leucine 824–alanine 844. Proline 845 is a topological domain (cytoplasmic). The next 2 helical transmembrane spans lie at leucine 846–leucine 866 and valine 891–leucine 911. At leucine 912–asparagine 955 the chain is on the cytoplasmic side. Helical transmembrane passes span valine 956–phenylalanine 976 and tryptophan 998–isoleucine 1018. The Cytoplasmic portion of the chain corresponds to proline 1019 to valine 1043. Positions glycine 1023–valine 1043 are disordered.

This sequence belongs to the cation transport ATPase (P-type) (TC 3.A.3) family. Type IIB subfamily.

It is found in the membrane. The enzyme catalyses Ca(2+)(in) + ATP + H2O = Ca(2+)(out) + ADP + phosphate + H(+). With respect to regulation, activated by calmodulin. Functionally, this magnesium-dependent enzyme catalyzes the hydrolysis of ATP coupled with the translocation of calcium from the cytosol out of the cell, into the endoplasmic reticulum, or into organelles. The protein is Calcium-transporting ATPase 1, plasma membrane-type of Oryza sativa subsp. japonica (Rice).